The sequence spans 580 residues: NADH-quinone oxidoreductase subunit C/D (580 aa).

The interval 1–171 (MSFDQVIADA…PPFVLTDRLF (171 aa)) is NADH dehydrogenase I subunit C. Positions 195–580 (ELMVLNFGPH…IDFVMSDVDR (386 aa)) are NADH dehydrogenase I subunit D.

In the N-terminal section; belongs to the complex I 30 kDa subunit family. The protein in the C-terminal section; belongs to the complex I 49 kDa subunit family. As to quaternary structure, NDH-1 is composed of 13 different subunits. Subunits NuoB, CD, E, F, and G constitute the peripheral sector of the complex.

It is found in the cell inner membrane. It carries out the reaction a quinone + NADH + 5 H(+)(in) = a quinol + NAD(+) + 4 H(+)(out). NDH-1 shuttles electrons from NADH, via FMN and iron-sulfur (Fe-S) centers, to quinones in the respiratory chain. The immediate electron acceptor for the enzyme in this species is believed to be ubiquinone. Couples the redox reaction to proton translocation (for every two electrons transferred, four hydrogen ions are translocated across the cytoplasmic membrane), and thus conserves the redox energy in a proton gradient. The polypeptide is NADH-quinone oxidoreductase subunit C/D (Cereibacter sphaeroides (strain ATCC 17025 / ATH 2.4.3) (Rhodobacter sphaeroides)).